The sequence spans 362 residues: Heme A synthase (362 aa).

The next 5 membrane-spanning stretches (helical) occupy residues 15-35 (VRIW…VGGA), 104-124 (VIGI…AIAP), 129-149 (ALWA…WMVA), 161-181 (VRLA…VWTL), and 200-220 (AIAL…VAGL). A heme-binding site is contributed by histidine 264. The next 3 membrane-spanning stretches (helical) occupy residues 266 to 285 (MMAY…ALRA), 293 to 313 (GALW…LTLL), and 316 to 336 (VPIG…TLAV). Histidine 324 lines the heme pocket.

It belongs to the COX15/CtaA family. Type 2 subfamily. In terms of assembly, interacts with CtaB. It depends on heme b as a cofactor.

The protein localises to the cell membrane. The catalysed reaction is Fe(II)-heme o + 2 A + H2O = Fe(II)-heme a + 2 AH2. Its pathway is porphyrin-containing compound metabolism; heme A biosynthesis; heme A from heme O: step 1/1. In terms of biological role, catalyzes the conversion of heme O to heme A by two successive hydroxylations of the methyl group at C8. The first hydroxylation forms heme I, the second hydroxylation results in an unstable dihydroxymethyl group, which spontaneously dehydrates, resulting in the formyl group of heme A. The sequence is that of Heme A synthase from Rhodopseudomonas palustris (strain BisB5).